Here is a 382-residue protein sequence, read N- to C-terminus: Hyaluronidase (382 aa).

The or 24 signal peptide spans M1 to G28. A propeptide spanning residues F29 to T33 is cleaved from the precursor. Intrachain disulfides connect C54–C345 and C221–C233. N115 is a glycosylation site (N-linked (GlcNAc...) asparagine). The active-site Proton donor is E145. N-linked (GlcNAc...) (complex) asparagine glycosylation occurs at N263.

Belongs to the glycosyl hydrolase 56 family. Homotetramer. In terms of processing, N-glycosylated. Glycans found include a majority of small oligosaccharides (Man1-3GlcNAc2), most of which are either alpha 1,3-monofucosylated or alpha 1,3-(alpha 1,6-)difucosylated at the innermost GlcNAc residue, approximately 5% of high-mannose type structures, and 8% contains the terminal trisaccharide GalNAc beta 1-4[Fuc alpha 1-3]GlcNAc beta 1-in beta 1,2-linkage to the core alpha 1,3-mannosyl residue. As to expression, expressed in the venom glands of worker bees. It is also detected in the testes of drones but not in the queen-bee venom glands or in pupae.

The protein localises to the secreted. The catalysed reaction is Random hydrolysis of (1-&gt;4)-linkages between N-acetyl-beta-D-glucosamine and D-glucuronate residues in hyaluronate.. Functionally, hydrolyzes high molecular weight hyaluronic acid to produce small oligosaccharides. The polypeptide is Hyaluronidase (Apis mellifera (Honeybee)).